The chain runs to 293 residues: tRNA pseudouridine synthase A (293 aa).

The active-site Nucleophile is the D67. Y125 contacts substrate.

It belongs to the tRNA pseudouridine synthase TruA family. In terms of assembly, homodimer.

The catalysed reaction is uridine(38/39/40) in tRNA = pseudouridine(38/39/40) in tRNA. Formation of pseudouridine at positions 38, 39 and 40 in the anticodon stem and loop of transfer RNAs. The sequence is that of tRNA pseudouridine synthase A from Synechococcus sp. (strain CC9605).